The chain runs to 257 residues: Aspartate/glutamate leucyltransferase (257 aa).

Belongs to the R-transferase family. Bpt subfamily.

The protein resides in the cytoplasm. The catalysed reaction is N-terminal L-glutamyl-[protein] + L-leucyl-tRNA(Leu) = N-terminal L-leucyl-L-glutamyl-[protein] + tRNA(Leu) + H(+). It carries out the reaction N-terminal L-aspartyl-[protein] + L-leucyl-tRNA(Leu) = N-terminal L-leucyl-L-aspartyl-[protein] + tRNA(Leu) + H(+). Functions in the N-end rule pathway of protein degradation where it conjugates Leu from its aminoacyl-tRNA to the N-termini of proteins containing an N-terminal aspartate or glutamate. The chain is Aspartate/glutamate leucyltransferase from Rhodopseudomonas palustris (strain BisB5).